A 267-amino-acid polypeptide reads, in one-letter code: Regulatory protein RecX (267 aa).

Belongs to the RecX family.

It is found in the cytoplasm. Its function is as follows. Modulates RecA activity. In Staphylococcus carnosus (strain TM300), this protein is Regulatory protein RecX.